A 345-amino-acid chain; its full sequence is Type II methyltransferase M.AplI (345 aa).

The SAM-dependent MTase C5-type domain occupies 25-325 (LVVLDLFAGC…KSVKMTLENK (301 aa)). Residue cysteine 93 is part of the active site.

Belongs to the class I-like SAM-binding methyltransferase superfamily. C5-methyltransferase family.

The enzyme catalyses a 2'-deoxycytidine in DNA + S-adenosyl-L-methionine = a 5-methyl-2'-deoxycytidine in DNA + S-adenosyl-L-homocysteine + H(+). A methylase, recognizes the double-stranded sequence 5'-CTGCAG-3', methylates C-4 on both strands, and protects the DNA from cleavage by the AplI endonuclease. The chain is Type II methyltransferase M.AplI (aplIM) from Arthrospira platensis (strain NIES-39 / UTEX 3086 / IAM M-135) (Spirulina platensis).